A 59-amino-acid chain; its full sequence is UPF0391 membrane protein AZC_4184 (59 aa).

Helical transmembrane passes span 4-24 and 30-50; these read WALTFLVVAIIAAVLGFTAVA and IAKIIFYVAIVLFLISAVMGF.

This sequence belongs to the UPF0391 family.

It localises to the cell membrane. In Azorhizobium caulinodans (strain ATCC 43989 / DSM 5975 / JCM 20966 / LMG 6465 / NBRC 14845 / NCIMB 13405 / ORS 571), this protein is UPF0391 membrane protein AZC_4184.